A 284-amino-acid chain; its full sequence is NAD kinase (284 aa).

Residue Asp67 is the Proton acceptor of the active site. Residues 67–68 (DG), 141–142 (ND), Arg152, Lys169, Asp171, 182–187 (TGYSLS), and Gln241 contribute to the NAD(+) site.

It belongs to the NAD kinase family. The cofactor is a divalent metal cation.

The protein resides in the cytoplasm. The enzyme catalyses NAD(+) + ATP = ADP + NADP(+) + H(+). Involved in the regulation of the intracellular balance of NAD and NADP, and is a key enzyme in the biosynthesis of NADP. Catalyzes specifically the phosphorylation on 2'-hydroxyl of the adenosine moiety of NAD to yield NADP. In Geobacter sulfurreducens (strain ATCC 51573 / DSM 12127 / PCA), this protein is NAD kinase.